A 600-amino-acid chain; its full sequence is RNA-binding protein 47 (600 aa).

Residues 1 to 25 show a composition bias toward low complexity; sequence MTAEDSASAVAMSNPSPSSSSKSSS. The segment at 1-37 is disordered; the sequence is MTAEDSASAVAMSNPSPSSSSKSSSGHPQHHCTVPEG. RRM domains follow at residues 82–160, 162–244, and 257–329; these read CEIF…SSVD, CRLF…WAEP, and KILY…LAKP.

Belongs to the RRM RBM47 family. In terms of assembly, homodimer. May interact with MAVS; may regulate MAVS lysosomal degradation.

Its subcellular location is the nucleus. It is found in the cytoplasm. Functionally, single-stranded RNA-binding protein that functions in a variety of RNA processes, including alternative splicing, RNA stabilization, and RNA editing. Independently of its RNA-binding activity, could negatively regulate MAVS by promoting its lysosomal degradation. The chain is RNA-binding protein 47 (rbm47) from Danio rerio (Zebrafish).